The sequence spans 596 residues: MASVVCNSSSSTTTTTLKTPFTSLGSTPKPSQLFLHGKRNKTFKVSCKVINNNGNQDETNSVDRRNVLLGLGGLYGVANAIPLAASATPIPSPDLKTCGRATISDGPLVPYSCCPPPMPTNFDTIPYYKFPSMTKLRIRTPAHAVDEEYIAKYNLAISRMRDLDKTEPLNPLGFKQQANIHCAYCNGAYIIGGKELQVHNSWLFFPFHRWYLYFYERILGKLIDDPTFALPYWNWDHPKGMRLPPMFDREGSSLYDERRNQQVRNGTVLDLGSFGDKVETTQLQLMSNNLTLMYRQMVTNAPCPLLFFGAPYVLGNNVEAPGTIETIPHIPVHIWAGTVRGSKFPNGDVSYGEDMGNFYSAGLDPVFYCHHGNVDRMWNEWKAIGGKRRDISEKDWLNSEFFFYDEHKNPYRVKVRDCLDTKKMGYDYAPMPTPWRNFKPKSKASVGKVNTSTLPPANEVFPLAKMDKTISFAINRPASSRTQQEKNEQEEMLTFNNIRYDNRGYIRFDVFLNVDNNVNANELDKAEFAGSYTSLPHVHRAGENDHIAKVNFQLAITELLEDIGLEDEDTIAVTLVPKKGGEGISIENVEIKLVDC.

Positions 1-23 are disordered; it reads MASVVCNSSSSTTTTTLKTPFTS. Residues 1–87 constitute a chloroplast transit peptide; it reads MASVVCNSSS…ANAIPLAASA (87 aa). The segment covering 8-23 has biased composition (low complexity); it reads SSSSTTTTTLKTPFTS. Disulfide bonds link cysteine 98–cysteine 114 and cysteine 113–cysteine 182. Residues histidine 181, histidine 199, histidine 208, histidine 329, histidine 333, and histidine 371 each coordinate Cu cation. Positions 185 to 199 form a cross-link, 2'-(S-cysteinyl)-histidine (Cys-His); sequence CNGAYIIGGKELQVH.

The protein belongs to the tyrosinase family. Requires Cu(2+) as cofactor.

The protein localises to the plastid. It is found in the chloroplast thylakoid lumen. The enzyme catalyses 2 catechol + O2 = 2 1,2-benzoquinone + 2 H2O. Catalyzes the oxidation of mono- and o-diphenols to o-diquinones. The polypeptide is Polyphenol oxidase B, chloroplastic (Solanum lycopersicum (Tomato)).